The chain runs to 204 residues: Large ribosomal subunit protein eL15 (204 aa).

It belongs to the eukaryotic ribosomal protein eL15 family. As to quaternary structure, component of the large ribosomal subunit.

The protein resides in the cytoplasm. Its function is as follows. Component of the large ribosomal subunit. The ribosome is a large ribonucleoprotein complex responsible for the synthesis of proteins in the cell. The protein is Large ribosomal subunit protein eL15 (rpl15) of Monopterus albus (Swamp eel).